Here is a 329-residue protein sequence, read N- to C-terminus: GTP 3',8-cyclase (329 aa).

In terms of domain architecture, Radical SAM core spans A8–A234. R17 is a binding site for GTP. Positions 24 and 28 each coordinate [4Fe-4S] cluster. Y30 serves as a coordination point for S-adenosyl-L-methionine. C31 serves as a coordination point for [4Fe-4S] cluster. GTP is bound at residue R68. G72 serves as a coordination point for S-adenosyl-L-methionine. T99 is a binding site for GTP. Position 123 (S123) interacts with S-adenosyl-L-methionine. K160 provides a ligand contact to GTP. M194 provides a ligand contact to S-adenosyl-L-methionine. The [4Fe-4S] cluster site is built by C257 and C260. R262–R264 lines the GTP pocket. C274 lines the [4Fe-4S] cluster pocket.

This sequence belongs to the radical SAM superfamily. MoaA family. In terms of assembly, monomer and homodimer. [4Fe-4S] cluster serves as cofactor.

It carries out the reaction GTP + AH2 + S-adenosyl-L-methionine = (8S)-3',8-cyclo-7,8-dihydroguanosine 5'-triphosphate + 5'-deoxyadenosine + L-methionine + A + H(+). It functions in the pathway cofactor biosynthesis; molybdopterin biosynthesis. Catalyzes the cyclization of GTP to (8S)-3',8-cyclo-7,8-dihydroguanosine 5'-triphosphate. The chain is GTP 3',8-cyclase from Salmonella newport (strain SL254).